The following is a 504-amino-acid chain: uncharacterized protein (504 aa).

The protein to M.thermoautotrophicum MTH1137.

This is an uncharacterized protein from Methanocaldococcus jannaschii (strain ATCC 43067 / DSM 2661 / JAL-1 / JCM 10045 / NBRC 100440) (Methanococcus jannaschii).